Here is a 205-residue protein sequence, read N- to C-terminus: Probable thymidylate kinase (205 aa).

9 to 16 (GIDGVGKS) lines the ATP pocket.

The protein belongs to the thymidylate kinase family.

The catalysed reaction is dTMP + ATP = dTDP + ADP. This Caldivirga maquilingensis (strain ATCC 700844 / DSM 13496 / JCM 10307 / IC-167) protein is Probable thymidylate kinase.